The following is a 162-amino-acid chain: Caveolin-2 (162 aa).

Over 1–86 the chain is Cytoplasmic; that stretch reads MGLETEKADV…FEMSKYVIYK (86 aa). Y19 bears the Phosphotyrosine; by SRC mark. Phosphoserine occurs at positions 20 and 23. Y27 is modified (phosphotyrosine; by SRC). The helical intramembrane region spans 87–107; the sequence is FLTVFLAIPLAFAAGILFATL. At 108-162 the chain is on the cytoplasmic side; that stretch reads SCLHIWIIMPFVKTCLMVLPSVQTIWKSVTDVVIAPLCTSIGRSFSSVSLQLSHD.

This sequence belongs to the caveolin family. In terms of assembly, monomer or homodimer. Interacts with CAV1; the interaction forms a stable heterooligomeric complex that is required for targeting to lipid rafts and for caveolae formation. Tyrosine phosphorylated forms do not form heterooligomers with the Tyr-19-phosphorylated form existing as a monomer or dimer, and the Tyr-27-form as a monomer only. Interacts (tyrosine phosphorylated form) with the SH2 domain-containing proteins, RASA1, NCK1 and SRC. Interacts (tyrosine phosphorylated form) with INSR, the interaction (Tyr-27-phosphorylated form) is increased on insulin stimulation. Interacts (Tyr-19 phosphorylated form) with MAPK1 (phosphorylated form); the interaction, promoted by insulin, leads to nuclear location and MAPK1 activation. Interacts with STAT3; the interaction is increased on insulin-induced tyrosine phosphorylation leading to STAT activation. Phosphorylated on serine and tyrosine residues. CAV1 promotes phosphorylation on Ser-23 which then targets the complex to the plasma membrane, lipid rafts and caveolae. Phosphorylation on both Tyr-19 and Tyr-27 is required for insulin-induced 'Ser-727' phosphorylation of STAT3 and its activation. Phosphorylation on Tyr-19 is required for insulin-induced phosphorylation of MAPK1 and DNA binding of STAT3. Tyrosine phosphorylation is induced by both EGF and insulin. As to expression, expressed in aortic endothelial cells.

Its subcellular location is the nucleus. It localises to the cytoplasm. The protein resides in the golgi apparatus membrane. The protein localises to the cell membrane. It is found in the membrane. Its subcellular location is the caveola. In terms of biological role, may act as a scaffolding protein within caveolar membranes. Interacts directly with G-protein alpha subunits and can functionally regulate their activity. Acts as an accessory protein in conjunction with CAV1 in targeting to lipid rafts and driving caveolae formation. Positive regulator of cellular mitogenesis of the MAPK signaling pathway. Required for the insulin-stimulated nuclear translocation and activation of MAPK1 and STAT3, and the subsequent regulation of cell cycle progression. The protein is Caveolin-2 (CAV2) of Bos taurus (Bovine).